The sequence spans 379 residues: MRVVLAGGGTAGHVEPALALADALRRINPDTQVLCLGTKRGLEQRLVPMRGYELAEIPAVPLPRKLTPQLLSVPGRLANAISTAAKHLDRVQADILVGFGGYVATPGYLAARSRRIPIVVHEANPLPGLANRLGARLTPHVFTGHPHTEIRNGRYIGIPLRTRISNLDRLAVGDKARSKFGLRPDLPTLLIFGGSQGAQAINQAAFDSAEDFYQAGIQVLHVVGPKNADGPEDRTRGGVPYVVVPYVDEMELAYAAADIAMCRSGALTCAELTAVGLPAVFVPLAIGNGEQRLNAEPIVQAGGGLMVANSELSRDWIREHLIPLLTDTDRIVAMSEAAARLGRRDADMALAREVIAIARGERPTPEMPIDYSEESGDTR.

UDP-N-acetyl-alpha-D-glucosamine contacts are provided by residues Thr10–Gly12, Asn124, Arg161, Ser195, and Gln291.

This sequence belongs to the glycosyltransferase 28 family. MurG subfamily.

It localises to the cell membrane. It carries out the reaction di-trans,octa-cis-undecaprenyl diphospho-N-acetyl-alpha-D-muramoyl-L-alanyl-D-glutamyl-meso-2,6-diaminopimeloyl-D-alanyl-D-alanine + UDP-N-acetyl-alpha-D-glucosamine = di-trans,octa-cis-undecaprenyl diphospho-[N-acetyl-alpha-D-glucosaminyl-(1-&gt;4)]-N-acetyl-alpha-D-muramoyl-L-alanyl-D-glutamyl-meso-2,6-diaminopimeloyl-D-alanyl-D-alanine + UDP + H(+). It functions in the pathway cell wall biogenesis; peptidoglycan biosynthesis. Cell wall formation. Catalyzes the transfer of a GlcNAc subunit on undecaprenyl-pyrophosphoryl-MurNAc-pentapeptide (lipid intermediate I) to form undecaprenyl-pyrophosphoryl-MurNAc-(pentapeptide)GlcNAc (lipid intermediate II). The protein is UDP-N-acetylglucosamine--N-acetylmuramyl-(pentapeptide) pyrophosphoryl-undecaprenol N-acetylglucosamine transferase of Thermobifida fusca (strain YX).